The chain runs to 344 residues: S-adenosylmethionine:tRNA ribosyltransferase-isomerase (344 aa).

It belongs to the QueA family. Monomer.

Its subcellular location is the cytoplasm. The catalysed reaction is 7-aminomethyl-7-carbaguanosine(34) in tRNA + S-adenosyl-L-methionine = epoxyqueuosine(34) in tRNA + adenine + L-methionine + 2 H(+). It functions in the pathway tRNA modification; tRNA-queuosine biosynthesis. Transfers and isomerizes the ribose moiety from AdoMet to the 7-aminomethyl group of 7-deazaguanine (preQ1-tRNA) to give epoxyqueuosine (oQ-tRNA). The sequence is that of S-adenosylmethionine:tRNA ribosyltransferase-isomerase from Levilactobacillus brevis (strain ATCC 367 / BCRC 12310 / CIP 105137 / JCM 1170 / LMG 11437 / NCIMB 947 / NCTC 947) (Lactobacillus brevis).